The primary structure comprises 514 residues: Putative ankyrin repeat protein R863 (514 aa).

ANK repeat units follow at residues 45 to 74, 84 to 114, 115 to 144, 146 to 174, 176 to 204, 205 to 234, 236 to 264, 266 to 294, 295 to 324, 325 to 354, 356 to 384, 385 to 414, 415 to 444, 446 to 474, and 476 to 504; these read AKID…LKHP, KSLN…DINS, KKNR…DVRA, KDYA…NIKV, DNFA…NIRA, DNNY…DIRA, NNYA…NVKS, NDCA…DVRS, ENDY…NVRA, DNNY…NIRS, NDYA…NFKS, DYDC…DIRV, NNDY…DIRA, NDYA…NVKA, and NNYA…DVRS.

This is Putative ankyrin repeat protein R863 from Acanthamoeba polyphaga mimivirus (APMV).